We begin with the raw amino-acid sequence, 139 residues long: Maximins 4/H3 type 4 (139 aa).

The first 18 residues, 1–18, serve as a signal peptide directing secretion; it reads MNFKYIIAVSFLIASAYA. Residues 19–43 constitute a propeptide that is removed on maturation; the sequence is RSVQNDEQSLSQRDVLEEESLREIR. N70 carries the asparagine amide modification. A propeptide spanning residues 74–118 is cleaved from the precursor; it reads TAEEHEVMKRLEAVMRDLDSLDHPEEASERETRGFNQDEIAKEKR. An Isoleucine amide modification is found at I138.

Belongs to the bombinin family. As to expression, expressed by the skin glands.

Its subcellular location is the secreted. In terms of biological role, maximin-4 shows antibacterial activity against both Gram-positive and Gram-negative bacteria. It also shows antimicrobial activity against the fungus C.albicans, but not against A.flavus nor P.uticale. It has little hemolytic activity. It does not possess a significant cytotoxicity against tumor cell lines. It does not possess a significant anti-HIV activity. Maximin-H3 shows antibacterial activity against both Gram-positive and Gram-negative bacteria. It also shows antimicrobial activity against the fungus C.albicans. Shows strong hemolytic activity. In Bombina maxima (Giant fire-bellied toad), this protein is Maximins 4/H3 type 4.